The following is a 109-amino-acid chain: Ferredoxin CarAc (109 aa).

Residues 3 to 108 enclose the 2Fe-2S ferredoxin-type domain; it reads AKVRVIFRAA…GLTLELPKAQ (106 aa). [2Fe-2S] cluster-binding residues include Cys43, Cys49, Cys52, and Cys89.

The protein belongs to the adrenodoxin/putidaredoxin family. In terms of assembly, monomer. Carbazole 1,9a-dioxygenase complex consists of a terminal oxygenase component CarAa, a ferredoxin reductase component fdr and a ferredoxin component CarAc. The cofactor is [2Fe-2S] cluster.

In terms of biological role, part of the multicomponent carbazole 1,9a-dioxygenase (CARDO), that converts carbazole (CAR) into 2-aminobiphenyl-2,3-diol. Acts as a mediator in the electron transfer from fdr to CarAa. This Sphingomonas sp protein is Ferredoxin CarAc (carAc).